A 382-amino-acid chain; its full sequence is MSDKYYRSAYMNVDLNAVASNFKVFSTLHPNKTVMAVVKANAYGLGSVKVARHLMENGATFFAVATLDEAIELRMHGITAKILVLGVLPAKDIDKAIQHRVALTVPSKQWLKEAIKNISGEQEKKLWLHIKLDTGMGRLGIKDTKTYQEVIEIIQQYEQLVFEGVFTHFACADEPGDMTTEQYQRFKDMVNEAIKPEYIHCQNSAGSLLMDCQFCNAIRPGISLYGYYPSEYVQQKVKVHLKPSVQLIANVVQTKTLQAGESVSYGATYTATDPTTIALLPIGYADGYLRIMQGSFVNVNGHQCEVIGRVCMDQTIVKVPDQVKAGDSVILIDNHRESPQSVEVVAEKQHTINYEVLCNLSRRLPRIYHDGDQRFVTNELLK.

The active-site Proton acceptor; specific for D-alanine is the K39. Position 39 is an N6-(pyridoxal phosphate)lysine (K39). Substrate is bound at residue R138. Y265 serves as the catalytic Proton acceptor; specific for L-alanine. M312 is a binding site for substrate.

This sequence belongs to the alanine racemase family. It depends on pyridoxal 5'-phosphate as a cofactor.

It carries out the reaction L-alanine = D-alanine. It functions in the pathway amino-acid biosynthesis; D-alanine biosynthesis; D-alanine from L-alanine: step 1/1. Its function is as follows. Catalyzes the interconversion of L-alanine and D-alanine. May also act on other amino acids. The protein is Alanine racemase 1 (alr1) of Staphylococcus aureus (strain NCTC 8325 / PS 47).